Consider the following 210-residue polypeptide: MTENVQLGALLAACHWIGEKGWCPATGGNMSLRLDSAQCLVTESGKDKGSLTADDFLLVETANNHVPSGRTPSAETGLHTLLYRLYPEINAVLHTHSVNATVLSRVERSNELVLHGYEMQKSLSGQRSHLDSVVIPIFDNDQDIPALAQRVAALADNHPLRYGFLVRGHGLYCWGNSVSEARRHLEGLEFLFQCELQRRLLDANFKLGAK.

Residues H94 and H96 each contribute to the Zn(2+) site.

It belongs to the aldolase class II family. MtnB subfamily. Requires Zn(2+) as cofactor.

The catalysed reaction is 5-(methylsulfanyl)-D-ribulose 1-phosphate = 5-methylsulfanyl-2,3-dioxopentyl phosphate + H2O. Its pathway is amino-acid biosynthesis; L-methionine biosynthesis via salvage pathway; L-methionine from S-methyl-5-thio-alpha-D-ribose 1-phosphate: step 2/6. In terms of biological role, catalyzes the dehydration of methylthioribulose-1-phosphate (MTRu-1-P) into 2,3-diketo-5-methylthiopentyl-1-phosphate (DK-MTP-1-P). The polypeptide is Methylthioribulose-1-phosphate dehydratase (Yersinia enterocolitica serotype O:8 / biotype 1B (strain NCTC 13174 / 8081)).